The sequence spans 148 residues: Myosin light chain 3, skeletal muscle isoform (148 aa).

Threonine 1 is subject to N-acetylthreonine. EF-hand domains follow at residues 6 to 41 (DQIE…LGQN) and 82 to 117 (GTYD…LGEK).

In terms of assembly, myosin is a hexamer of 2 heavy chains and 4 light chains.

This Chelon ramada (Thin-lipped grey mullet) protein is Myosin light chain 3, skeletal muscle isoform.